The primary structure comprises 427 residues: Phosphatidylserine decarboxylase proenzyme 1, mitochondrial (427 aa).

A mitochondrion-targeting transit peptide spans 1–77 (MRSYLRFSDR…RRFVYKLDQA (77 aa)). The Mitochondrial matrix segment spans residues 78–88 (VTAALGPNGRY). Residues 89-107 (IAMVGMTASAVLLTFHYKF) form a helical membrane-spanning segment. The Mitochondrial intermembrane segment spans residues 108 to 427 (REVIAATDNV…TEDERLFAFY (320 aa)). Active-site charge relay system; for autoendoproteolytic cleavage activity residues include D210, H268, and S379. S379 (schiff-base intermediate with substrate; via pyruvic acid; for decarboxylase activity) is an active-site residue. S379 is subject to Pyruvic acid (Ser); by autocatalysis.

Belongs to the phosphatidylserine decarboxylase family. PSD-B subfamily. Eukaryotic type I sub-subfamily. As to quaternary structure, heterodimer of a large membrane-associated beta subunit and a small pyruvoyl-containing alpha subunit. The cofactor is pyruvate. Is synthesized initially as an inactive proenzyme. Formation of the active enzyme involves a self-maturation process in which the active site pyruvoyl group is generated from an internal serine residue via an autocatalytic post-translational modification. Two non-identical subunits are generated from the proenzyme in this reaction, and the pyruvate is formed at the N-terminus of the alpha chain, which is derived from the carboxyl end of the proenzyme. The autoendoproteolytic cleavage occurs by a canonical serine protease mechanism, in which the side chain hydroxyl group of the serine supplies its oxygen atom to form the C-terminus of the beta chain, while the remainder of the serine residue undergoes an oxidative deamination to produce ammonia and the pyruvoyl prosthetic group on the alpha chain. During this reaction, the Ser that is part of the protease active site of the proenzyme becomes the pyruvoyl prosthetic group, which constitutes an essential element of the active site of the mature decarboxylase.

The protein resides in the mitochondrion. The protein localises to the mitochondrion inner membrane. It catalyses the reaction a 1,2-diacyl-sn-glycero-3-phospho-L-serine + H(+) = a 1,2-diacyl-sn-glycero-3-phosphoethanolamine + CO2. It participates in phospholipid metabolism; phosphatidylethanolamine biosynthesis; phosphatidylethanolamine from CDP-diacylglycerol: step 2/2. Its function is as follows. Catalyzes the formation of phosphatidylethanolamine (PtdEtn) from phosphatidylserine (PtdSer). Plays a central role in phospholipid metabolism and in the interorganelle trafficking of phosphatidylserine. The sequence is that of Phosphatidylserine decarboxylase proenzyme 1, mitochondrial from Toxoplasma gondii (strain ATCC 50853 / GT1).